The following is a 272-amino-acid chain: Cell division protein FtsQ (272 aa).

Residues 1–43 (MEYNPPNTRERIAARRQRLRQPSSEPAIPGWRRRFIDGLQSGR) lie on the Cytoplasmic side of the membrane. Residues 44 to 64 (IVSGAVFVVSCLALFYVLFSS) form a helical membrane-spanning segment. Residues 65–272 (QFRVQTVEVV…FYQNRTDGRS (208 aa)) lie on the Extracellular side of the membrane. The 68-residue stretch at 66-133 (FRVQTVEVVG…DRARIVIVER (68 aa)) folds into the POTRA domain.

It belongs to the FtsQ/DivIB family. FtsQ subfamily.

It localises to the cell membrane. Its function is as follows. Essential cell division protein. The sequence is that of Cell division protein FtsQ from Chloroflexus aggregans (strain MD-66 / DSM 9485).